We begin with the raw amino-acid sequence, 236 residues long: 2-C-methyl-D-erythritol 4-phosphate cytidylyltransferase (236 aa).

The protein belongs to the IspD/TarI cytidylyltransferase family. IspD subfamily. Homodimer.

The enzyme catalyses 2-C-methyl-D-erythritol 4-phosphate + CTP + H(+) = 4-CDP-2-C-methyl-D-erythritol + diphosphate. It functions in the pathway isoprenoid biosynthesis; isopentenyl diphosphate biosynthesis via DXP pathway; isopentenyl diphosphate from 1-deoxy-D-xylulose 5-phosphate: step 2/6. In terms of biological role, catalyzes the formation of 4-diphosphocytidyl-2-C-methyl-D-erythritol from CTP and 2-C-methyl-D-erythritol 4-phosphate (MEP). The sequence is that of 2-C-methyl-D-erythritol 4-phosphate cytidylyltransferase from Escherichia coli O157:H7.